Here is a 117-residue protein sequence, read N- to C-terminus: Ribosome-binding factor A (117 aa).

It belongs to the RbfA family. As to quaternary structure, monomer. Binds 30S ribosomal subunits, but not 50S ribosomal subunits or 70S ribosomes.

It is found in the cytoplasm. One of several proteins that assist in the late maturation steps of the functional core of the 30S ribosomal subunit. Associates with free 30S ribosomal subunits (but not with 30S subunits that are part of 70S ribosomes or polysomes). Required for efficient processing of 16S rRNA. May interact with the 5'-terminal helix region of 16S rRNA. This chain is Ribosome-binding factor A, found in Nitrosomonas europaea (strain ATCC 19718 / CIP 103999 / KCTC 2705 / NBRC 14298).